We begin with the raw amino-acid sequence, 100 residues long: Co-chaperonin GroES (100 aa).

This sequence belongs to the GroES chaperonin family. As to quaternary structure, heptamer of 7 subunits arranged in a ring. Interacts with the chaperonin GroEL.

The protein resides in the cytoplasm. In terms of biological role, together with the chaperonin GroEL, plays an essential role in assisting protein folding. The GroEL-GroES system forms a nano-cage that allows encapsulation of the non-native substrate proteins and provides a physical environment optimized to promote and accelerate protein folding. GroES binds to the apical surface of the GroEL ring, thereby capping the opening of the GroEL channel. This chain is Co-chaperonin GroES, found in Mycobacterium leprae (strain Br4923).